Here is a 447-residue protein sequence, read N- to C-terminus: Argininosuccinate synthase (447 aa).

ATP is bound by residues 17–25 (AFSGGLDTS) and Ala-43. Tyr-99 lines the L-citrulline pocket. ATP is bound by residues Gly-129 and Thr-131. Positions 131, 135, and 136 each coordinate L-aspartate. Residue Asn-135 coordinates L-citrulline. Asp-136 is an ATP binding site. 2 residues coordinate L-citrulline: Arg-139 and Ser-192. Residue Asp-194 coordinates ATP. Thr-201, Glu-203, and Glu-280 together coordinate L-citrulline.

It belongs to the argininosuccinate synthase family. Type 2 subfamily. As to quaternary structure, homotetramer.

It is found in the cytoplasm. The enzyme catalyses L-citrulline + L-aspartate + ATP = 2-(N(omega)-L-arginino)succinate + AMP + diphosphate + H(+). It participates in amino-acid biosynthesis; L-arginine biosynthesis; L-arginine from L-ornithine and carbamoyl phosphate: step 2/3. In Salmonella schwarzengrund (strain CVM19633), this protein is Argininosuccinate synthase.